The primary structure comprises 343 residues: Heat-inducible transcription repressor HrcA (343 aa).

It belongs to the HrcA family.

In terms of biological role, negative regulator of class I heat shock genes (grpE-dnaK-dnaJ and groELS operons). Prevents heat-shock induction of these operons. This Mycolicibacterium smegmatis (strain ATCC 700084 / mc(2)155) (Mycobacterium smegmatis) protein is Heat-inducible transcription repressor HrcA.